Here is an 846-residue protein sequence, read N- to C-terminus: Interleukin cytokine receptor-related protein 1 (846 aa).

Positions 1–25 are cleaved as a signal peptide; that stretch reads MFLHSPALLIWLFLFCLAGPQAVRT. At 26-418 the chain is on the extracellular side; that stretch reads EPYNSTSSSS…KEDTTWTWHT (393 aa). N-linked (GlcNAc...) asparagine glycans are attached at residues asparagine 29, asparagine 79, asparagine 186, asparagine 214, asparagine 339, and asparagine 395. The segment at 388–409 is disordered; sequence EKPPATSNQTEESDGKAEKDKK. Basic and acidic residues predominate over residues 400 to 409; that stretch reads SDGKAEKDKK. A helical membrane pass occupies residues 419–439; it reads YAITGGAIIAILFILSVCAGL. Topologically, residues 440–846 are cytoplasmic; it reads KCYKKFNNKK…AFHDEVIGIH (407 aa). Residues 476 to 618 form the SEFIR domain; it reads SISVLIVYSH…IPNSLMTMTT (143 aa). Positions 737 to 771 are disordered; that stretch reads GPIHVEPTEPEVLEPAEEPMEEAEEDEEDEDDVDS. Acidic residues predominate over residues 744-771; sequence TEPEVLEPAEEPMEEAEEDEEDEDDVDS.

In terms of assembly, component of a heterodimeric receptor complex composed of ilcr-1 and ilcr-2. The receptor complex interacts with actl-1 and ilc-17.1 with the interaction being mediated by ilcr-2. As to expression, expressed in most neurons.

It localises to the cell membrane. Forms a receptor complex together with receptor ilcr-2, which upon activation acts as a modulator of neuronal activity. Binding of the ligand ilc-17.1 to the ilcr-1/2 receptor complex triggers a signaling cascade that activates the downstream signaling components actl-1, pik-1 and nfki-1, and results in increased neuronal activity in RMG interneurons in response to input from oxygen-sensing neurons. This leads to increased animal movement and promotes aggregation behavior. This Caenorhabditis elegans protein is Interleukin cytokine receptor-related protein 1.